Reading from the N-terminus, the 256-residue chain is Type III pantothenate kinase 1 (256 aa).

6-13 (DIGNSHIF) is an ATP binding site. 107-110 (GADR) serves as a coordination point for substrate. The active-site Proton acceptor is Asp-109. Asp-130 contacts K(+). Thr-133 provides a ligand contact to ATP. Thr-185 lines the substrate pocket.

This sequence belongs to the type III pantothenate kinase family. As to quaternary structure, homodimer. NH4(+) is required as a cofactor. K(+) serves as cofactor.

Its subcellular location is the cytoplasm. It catalyses the reaction (R)-pantothenate + ATP = (R)-4'-phosphopantothenate + ADP + H(+). It functions in the pathway cofactor biosynthesis; coenzyme A biosynthesis; CoA from (R)-pantothenate: step 1/5. Functionally, catalyzes the phosphorylation of pantothenate (Pan), the first step in CoA biosynthesis. This Francisella tularensis subsp. holarctica (strain LVS) protein is Type III pantothenate kinase 1.